Here is a 404-residue protein sequence, read N- to C-terminus: Serine/threonine transporter SstT (404 aa).

8 helical membrane passes run 17–37 (IGIGVVIGVMLGILAPDLTGF), 39–59 (ILGKLFVGGLKAIAPLLVFAL), 75–95 (MTLIIVLYLFGTFASALVAVL), 138–158 (ALATANYIGVLSWAIIFGLAL), 179–199 (IVVWIINLAPIGIMSLVFTTI), 212–232 (FLILVLVGTMVFVALVVNPLI), 287–307 (IPLGATINMGGAAITINVLTL), and 313–333 (FGIPIDFLTALLLSVVAAVSA).

This sequence belongs to the dicarboxylate/amino acid:cation symporter (DAACS) (TC 2.A.23) family.

Its subcellular location is the cell membrane. It catalyses the reaction L-serine(in) + Na(+)(in) = L-serine(out) + Na(+)(out). The enzyme catalyses L-threonine(in) + Na(+)(in) = L-threonine(out) + Na(+)(out). Its function is as follows. Involved in the import of serine and threonine into the cell, with the concomitant import of sodium (symport system). The sequence is that of Serine/threonine transporter SstT from Streptococcus pyogenes serotype M12 (strain MGAS2096).